A 308-amino-acid polypeptide reads, in one-letter code: Elongation factor Ts (308 aa).

The interval 80–83 is involved in Mg(2+) ion dislocation from EF-Tu; it reads TDFV.

Belongs to the EF-Ts family.

The protein localises to the cytoplasm. Functionally, associates with the EF-Tu.GDP complex and induces the exchange of GDP to GTP. It remains bound to the aminoacyl-tRNA.EF-Tu.GTP complex up to the GTP hydrolysis stage on the ribosome. This chain is Elongation factor Ts, found in Rhizobium etli (strain ATCC 51251 / DSM 11541 / JCM 21823 / NBRC 15573 / CFN 42).